A 233-amino-acid chain; its full sequence is Tapetum-specific methyltransferase 1 (233 aa).

Substrate is bound at residue Lys-8. S-adenosyl-L-methionine-binding positions include Val-52, Glu-74, 76–77, Ser-82, Asp-100, and Ala-129; that span reads GV. Substrate is bound at residue Asp-150. Position 150 (Asp-150) interacts with a divalent metal cation. Asp-152 contacts S-adenosyl-L-methionine. Residues Asp-176 and Asn-177 each coordinate a divalent metal cation.

It belongs to the class I-like SAM-binding methyltransferase superfamily. Cation-dependent O-methyltransferase family. CCoAMT subfamily. Requires a divalent metal cation as cofactor. Expressed in inflorescences and flower buds. Not detected in roots, leaves or stems. Located exclusively in the tapetum of developing stamen.

The protein operates within aromatic compound metabolism; phenylpropanoid biosynthesis. Functionally, methyltransferase involved in phenylpropanoid polyamine conjugate biosynthesis. In vivo, methylates only one of the 5-hydroxyferuloyl moieties of N1,N5,N10-tri-(hydroxyferuloyl)-spermidine, while is able in vitro to convert all three 5-hydroxyferuloyl residues to the corresponding sinapoyl moieties and to methylate caffeoyl CoA and tricaffeoyl spermidine. The polypeptide is Tapetum-specific methyltransferase 1 (TSM1) (Arabidopsis thaliana (Mouse-ear cress)).